Reading from the N-terminus, the 187-residue chain is dCTP deaminase (187 aa).

Residues 107 to 112, 131 to 133, Q152, Y166, K175, and Q176 contribute to the dCTP site; these read KSTYAR and TLE. Residue E133 is the Proton donor/acceptor of the active site.

It belongs to the dCTP deaminase family. In terms of assembly, homotrimer.

The enzyme catalyses dCTP + H2O + H(+) = dUTP + NH4(+). It functions in the pathway pyrimidine metabolism; dUMP biosynthesis; dUMP from dCTP (dUTP route): step 1/2. Functionally, catalyzes the deamination of dCTP to dUTP. The sequence is that of dCTP deaminase from Ehrlichia canis (strain Jake).